The primary structure comprises 417 residues: Queuine tRNA-ribosyltransferase accessory subunit 2 (417 aa).

Residues Cys324, Cys326, Cys329, and His355 each coordinate Zn(2+).

It belongs to the queuine tRNA-ribosyltransferase family. QTRT2 subfamily. Heterodimer of a catalytic subunit and an accessory subunit. The cofactor is Zn(2+).

It localises to the cytoplasm. In terms of biological role, non-catalytic subunit of the queuine tRNA-ribosyltransferase (TGT) that catalyzes the base-exchange of a guanine (G) residue with queuine (Q) at position 34 (anticodon wobble position) in tRNAs with GU(N) anticodons (tRNA-Asp, -Asn, -His and -Tyr), resulting in the hypermodified nucleoside queuosine (7-(((4,5-cis-dihydroxy-2-cyclopenten-1-yl)amino)methyl)-7-deazaguanosine). The protein is Queuine tRNA-ribosyltransferase accessory subunit 2 of Drosophila virilis (Fruit fly).